The following is a 1383-amino-acid chain: DNA-directed RNA polymerase subunit beta (1383 aa).

It belongs to the RNA polymerase beta chain family. In terms of assembly, the RNAP catalytic core consists of 2 alpha, 1 beta, 1 beta' and 1 omega subunit. When a sigma factor is associated with the core the holoenzyme is formed, which can initiate transcription.

It catalyses the reaction RNA(n) + a ribonucleoside 5'-triphosphate = RNA(n+1) + diphosphate. In terms of biological role, DNA-dependent RNA polymerase catalyzes the transcription of DNA into RNA using the four ribonucleoside triphosphates as substrates. This Xanthomonas axonopodis pv. citri (strain 306) protein is DNA-directed RNA polymerase subunit beta.